A 75-amino-acid chain; its full sequence is Sec-independent protein translocase protein TatA (75 aa).

Residues methionine 1 to glycine 21 traverse the membrane as a helical segment. The tract at residues aspartate 45 to serine 75 is disordered.

This sequence belongs to the TatA/E family. In terms of assembly, the Tat system comprises two distinct complexes: a TatABC complex, containing multiple copies of TatA, TatB and TatC subunits, and a separate TatA complex, containing only TatA subunits. Substrates initially bind to the TatABC complex, which probably triggers association of the separate TatA complex to form the active translocon.

The protein localises to the cell inner membrane. In terms of biological role, part of the twin-arginine translocation (Tat) system that transports large folded proteins containing a characteristic twin-arginine motif in their signal peptide across membranes. TatA could form the protein-conducting channel of the Tat system. The chain is Sec-independent protein translocase protein TatA from Bordetella bronchiseptica (strain ATCC BAA-588 / NCTC 13252 / RB50) (Alcaligenes bronchisepticus).